The primary structure comprises 229 residues: Flagellar L-ring protein 1 (229 aa).

The first 18 residues, 1 to 18 (MYLRKISAPLMTMLLLNG), serve as a signal peptide directing secretion. Cysteine 19 carries the N-palmitoyl cysteine lipid modification. Cysteine 19 carries S-diacylglycerol cysteine lipidation.

The protein belongs to the FlgH family. As to quaternary structure, the basal body constitutes a major portion of the flagellar organelle and consists of four rings (L,P,S, and M) mounted on a central rod.

It localises to the cell outer membrane. The protein resides in the bacterial flagellum basal body. Assembles around the rod to form the L-ring and probably protects the motor/basal body from shearing forces during rotation. This Yersinia pseudotuberculosis serotype I (strain IP32953) protein is Flagellar L-ring protein 1 (flgH1).